The chain runs to 48 residues: MTNKKNWKCAGCKNRYSSFDKEKKDGQLKFNCPNCGHTVRRYTILGGY.

This is an uncharacterized protein from His1 virus (isolate Australia/Victoria) (His1V).